Reading from the N-terminus, the 1030-residue chain is Semaphorin-6A (1030 aa).

The N-terminal stretch at 1–18 (MRSEALLLYFTLLHFAGA) is a signal peptide. Topologically, residues 19 to 649 (GFPEDSEPIS…KGHDQLVPVT (631 aa)) are extracellular. The 489-residue stretch at 24–512 (SEPISISHGN…FSTCVIKVPL (489 aa)) folds into the Sema domain. N-linked (GlcNAc...) asparagine glycosylation is found at Asn33, Asn49, and Asn65. 4 cysteine pairs are disulfide-bonded: Cys107/Cys117, Cys135/Cys144, Cys258/Cys369, and Cys283/Cys328. The N-linked (GlcNAc...) asparagine glycan is linked to Asn282. 2 N-linked (GlcNAc...) asparagine glycosylation sites follow: Asn434 and Asn461. 4 cysteine pairs are disulfide-bonded: Cys477-Cys506, Cys515-Cys533, Cys521-Cys568, and Cys525-Cys542. A helical transmembrane segment spans residues 650–670 (LLAIAVILAFVMGAVFSGITV). Topologically, residues 671–1030 (YCVCDHRRKD…TSMKPNDACT (360 aa)) are cytoplasmic. Ser698 carries the post-translational modification Phosphoserine. Disordered regions lie at residues 754–778 (ALPT…REWE), 860–897 (SSKS…SLSQ), and 912–1030 (YGVD…DACT). Positions 920 to 936 (YPTNSLTRSHQATTLKR) are enriched in polar residues. A compositionally biased stretch (low complexity) spans 937–952 (NNTNSSNSSHLSRNQS). Ser952 is modified (phosphoserine). 2 stretches are compositionally biased toward polar residues: residues 970-997 (QVHS…SLTR) and 1018-1030 (PLST…DACT).

This sequence belongs to the semaphorin family. Active as a homodimer or oligomer. The SEMA6A homodimer interacts with a PLXNA2 homodimer, giving rise to a heterotetramer. Interacts with EVL. As to quaternary structure, (Microbial infection) Interacts with P.sordellii toxin TcsL; semaphorins SEMA6A and SEMA6B constitute the major host receptors for TcsL in the vascular endothelium.

The protein resides in the cell membrane. Its function is as follows. Cell surface receptor for PLXNA2 that plays an important role in cell-cell signaling. Required for normal granule cell migration in the developing cerebellum. Promotes reorganization of the actin cytoskeleton and plays an important role in axon guidance in the developing central nervous system. Can act as repulsive axon guidance cue. Has repulsive action towards migrating granular neurons. May play a role in channeling sympathetic axons into the sympathetic chains and controlling the temporal sequence of sympathetic target innervation. In terms of biological role, (Microbial infection) Acts as a receptor for P.sordellii toxin TcsL in the in the vascular endothelium. The sequence is that of Semaphorin-6A (SEMA6A) from Homo sapiens (Human).